The primary structure comprises 215 residues: Proteasome subunit beta type-1 (215 aa).

At Met-1 the chain carries N-acetylmethionine. A propeptide spans Met-1 to Gly-19 (removed in mature form). Thr-20 (nucleophile) is an active-site residue.

The protein belongs to the peptidase T1B family. In terms of assembly, the 26S proteasome consists of a 20S proteasome core and two 19S regulatory subunits. The 20S proteasome core is composed of 28 subunits that are arranged in four stacked rings, resulting in a barrel-shaped structure. The two end rings are each formed by seven alpha subunits, and the two central rings are each formed by seven beta subunits. The catalytic chamber with the active sites is on the inside of the barrel.

It is found in the cytoplasm. The protein localises to the nucleus. The enzyme catalyses Cleavage of peptide bonds with very broad specificity.. Functionally, the proteasome degrades poly-ubiquitinated proteins in the cytoplasm and in the nucleus. It is essential for the regulated turnover of proteins and for the removal of misfolded proteins. The proteasome is a multicatalytic proteinase complex that is characterized by its ability to cleave peptides with Arg, Phe, Tyr, Leu, and Glu adjacent to the leaving group at neutral or slightly basic pH. It has an ATP-dependent proteolytic activity. PRE3 and PRE4 are necessary for the peptidyl-glutamyl-peptide-hydrolyzing activity. In terms of biological role, this subunit is necessary for the peptidylglutamyl-peptide hydrolyzing activity. This chain is Proteasome subunit beta type-1 (PRE3), found in Saccharomyces cerevisiae (strain ATCC 204508 / S288c) (Baker's yeast).